Here is a 102-residue protein sequence, read N- to C-terminus: Small ribosomal subunit protein uS10m (102 aa).

The protein belongs to the universal ribosomal protein uS10 family.

It is found in the mitochondrion. The sequence is that of Small ribosomal subunit protein uS10m (RPS10) from Marchantia polymorpha (Common liverwort).